A 431-amino-acid polypeptide reads, in one-letter code: Acetylornithine aminotransferase (431 aa).

Residues 118-119 (GA) and phenylalanine 157 each bind pyridoxal 5'-phosphate. Arginine 160 is a binding site for N(2)-acetyl-L-ornithine. Residue 251–254 (DEVQ) participates in pyridoxal 5'-phosphate binding. Lysine 284 carries the N6-(pyridoxal phosphate)lysine modification. Serine 313 serves as a coordination point for N(2)-acetyl-L-ornithine. Residue threonine 314 participates in pyridoxal 5'-phosphate binding.

It belongs to the class-III pyridoxal-phosphate-dependent aminotransferase family. ArgD subfamily. In terms of assembly, homodimer. It depends on pyridoxal 5'-phosphate as a cofactor.

The protein localises to the cytoplasm. It catalyses the reaction N(2)-acetyl-L-ornithine + 2-oxoglutarate = N-acetyl-L-glutamate 5-semialdehyde + L-glutamate. It participates in amino-acid biosynthesis; L-arginine biosynthesis; N(2)-acetyl-L-ornithine from L-glutamate: step 4/4. The polypeptide is Acetylornithine aminotransferase (Bifidobacterium longum (strain NCC 2705)).